A 600-amino-acid polypeptide reads, in one-letter code: MREISVPAPFTVGEHDNVAAMVFEHERDDPDYVIYQRLIDGVWTDVTCAEAANQIRAAALGLISLGVQAGDRVVIFSATRYEWAILDFAILAVGAVTVPIYETSSAEQVRWVLQDSEAVVLFAETDSHATMVAELSGSVPALREVLQIAGSGPNALDRLTEAGASVDPAELTARLAALRSTDPATLIYTSGTTGRPKGCQLTQSNLVHEIKGARAYHPTLLRKGERLLVFLPLAHVLARAISMAAFHSKVTVGFTSDIKNLLPMLAVFKPTVVVSVPRVFEKVYNTAEQNAANAGKGRIFAIAAQTAVDWSEACDRGGPGLLLRAKHAVFDRLVYRKLRAALGGNCRAAVSGGAPLGARLGHFYRGAGLTIYEGYGLSETSGGVAISQFNDLKIGTVGKPVPGNSLRIADDGELLVRGGVVFSGYWRNEQATTEAFTDGWFKTGDLGAVDEDGFLTITGRKKEIIVTAGGKNVAPAVLEDQLRAHPLISQAVVVGDAKPFIGALITIDPEAFEGWKQRNSKTAGASVGDLATDPDLIAEIDAAVKQANLAVSHAESIRKFRILPVDFTEDTGELTPTMKVKRKVVAEKFASDIEAIYNKE.

Belongs to the ATP-dependent AMP-binding enzyme family.

It carries out the reaction a long-chain fatty acid + ATP + CoA = a long-chain fatty acyl-CoA + AMP + diphosphate. Its pathway is lipid metabolism; fatty acid biosynthesis. Catalyzes the activation of long-chain fatty acids as acyl-coenzyme A (acyl-CoA), which are then transferred to the multifunctional polyketide synthase (PKS) type III for further chain extension. This chain is Long-chain-fatty-acid--CoA ligase FadD15 (fadD15), found in Mycobacterium bovis (strain ATCC BAA-935 / AF2122/97).